A 450-amino-acid chain; its full sequence is Exodeoxyribonuclease 7 large subunit (450 aa).

The protein belongs to the XseA family. As to quaternary structure, heterooligomer composed of large and small subunits.

It localises to the cytoplasm. It catalyses the reaction Exonucleolytic cleavage in either 5'- to 3'- or 3'- to 5'-direction to yield nucleoside 5'-phosphates.. Functionally, bidirectionally degrades single-stranded DNA into large acid-insoluble oligonucleotides, which are then degraded further into small acid-soluble oligonucleotides. The sequence is that of Exodeoxyribonuclease 7 large subunit from Listeria innocua serovar 6a (strain ATCC BAA-680 / CLIP 11262).